The chain runs to 167 residues: Interferon gamma (167 aa).

Positions 1–23 (MNYTSFIFAFQLCIILCSSGYYC) are cleaved as a signal peptide. Gln24 is modified (pyrrolidone carboxylic acid). Residues Asn39 and Asn107 are each glycosylated (N-linked (GlcNAc...) asparagine).

This sequence belongs to the type II (or gamma) interferon family. As to quaternary structure, homodimer. Interacts with IFNGR1 (via extracellular domain); this interaction promotes IFNGR1 dimerization. In terms of tissue distribution, released primarily from activated T lymphocytes.

The protein localises to the secreted. Functionally, type II interferon produced by immune cells such as T-cells and NK cells that plays crucial roles in antimicrobial, antiviral, and antitumor responses by activating effector immune cells and enhancing antigen presentation. Primarily signals through the JAK-STAT pathway after interaction with its receptor IFNGR1 to affect gene regulation. Upon IFNG binding, IFNGR1 intracellular domain opens out to allow association of downstream signaling components JAK2, JAK1 and STAT1, leading to STAT1 activation, nuclear translocation and transcription of IFNG-regulated genes. Many of the induced genes are transcription factors such as IRF1 that are able to further drive regulation of a next wave of transcription. Plays a role in class I antigen presentation pathway by inducing a replacement of catalytic proteasome subunits with immunoproteasome subunits. In turn, increases the quantity, quality, and repertoire of peptides for class I MHC loading. Increases the efficiency of peptide generation also by inducing the expression of activator PA28 that associates with the proteasome and alters its proteolytic cleavage preference. Up-regulates as well MHC II complexes on the cell surface by promoting expression of several key molecules such as cathepsins B/CTSB, H/CTSH, and L/CTSL. Participates in the regulation of hematopoietic stem cells during development and under homeostatic conditions by affecting their development, quiescence, and differentiation. The chain is Interferon gamma (IFNG) from Felis catus (Cat).